The following is a 335-amino-acid chain: Biotin synthase (335 aa).

The region spanning 46 to 274 is the Radical SAM core domain; the sequence is YNIQLASLFS…KSKIRLSAGR (229 aa). Residues cysteine 61, cysteine 65, and cysteine 68 each contribute to the [4Fe-4S] cluster site. Cysteine 105, cysteine 137, cysteine 197, and arginine 269 together coordinate [2Fe-2S] cluster.

It belongs to the radical SAM superfamily. Biotin synthase family. Homodimer. [4Fe-4S] cluster serves as cofactor. It depends on [2Fe-2S] cluster as a cofactor.

The enzyme catalyses (4R,5S)-dethiobiotin + (sulfur carrier)-SH + 2 reduced [2Fe-2S]-[ferredoxin] + 2 S-adenosyl-L-methionine = (sulfur carrier)-H + biotin + 2 5'-deoxyadenosine + 2 L-methionine + 2 oxidized [2Fe-2S]-[ferredoxin]. The protein operates within cofactor biosynthesis; biotin biosynthesis; biotin from 7,8-diaminononanoate: step 2/2. Catalyzes the conversion of dethiobiotin (DTB) to biotin by the insertion of a sulfur atom into dethiobiotin via a radical-based mechanism. The chain is Biotin synthase from Prochlorococcus marinus (strain AS9601).